Consider the following 462-residue polypeptide: Ubiquitin carboxyl-terminal hydrolase calypso (462 aa).

One can recognise a UCH catalytic domain in the interval 29–260 (GWLELESDPG…IRFNLMAVVP (232 aa)). Residue C115 is the Nucleophile of the active site. The Proton donor role is filled by H197. Positions 357–385 (NYDKFICTFLTMLAHQGVLGELVSQHLLP) constitute a ULD domain. Residues 387–462 (KKISGQSAAN…KGRNKCRKRK (76 aa)) form a positively charged C-terminal tail required for binding nucleosomes region. The segment at 394–462 (AANRLNKQNS…KGRNKCRKRK (69 aa)) is disordered. The span at 399–447 (NKQNSAAASTANSSAGATAGGAKSQQQQQQQQQPQQPQTPKNGKSPGKT) shows a compositional bias: low complexity. Residues 448–462 (PGRRRKGRNKCRKRK) show a composition bias toward basic residues.

This sequence belongs to the peptidase C12 family. BAP1 subfamily. In terms of assembly, catalytic component of the polycomb repressive deubiquitinase (PR-DUB) complex, at least composed of caly/calypso, Asx and sba (MBD5/6 homolog). The PR-DUB complex associates with nucleosomes to mediate deubiquitination of histone H2AK118ub1 substrates; the association requires the positively charged C-terminal tail of caly, probably due to direct binding of DNA. Interacts (via ULD domain) with Asx (via DEUBAD domain); the interaction produces a stable heterodimer with a composite binding site for ubiquitin. Homodimerizes (via coiled-coil hinge-region between the UCH and ULD domains) to mediate assembly of 2 copies of the caly-Asx heterodimer into a bisymmetric tetramer; dimerization enhances PR-DUB association with nucleosomes.

It localises to the nucleus. It catalyses the reaction Thiol-dependent hydrolysis of ester, thioester, amide, peptide and isopeptide bonds formed by the C-terminal Gly of ubiquitin (a 76-residue protein attached to proteins as an intracellular targeting signal).. Functionally, catalytic component of the polycomb repressive deubiquitinase (PR-DUB) complex, a complex that specifically mediates deubiquitination of histone H2A monoubiquitinated at 'Lys-119' (H2AK118ub1). Mediates bisymmetric organization of the PR-DUB complex and is involved in association with nucleosomes to mediate deubiquitination. Does not deubiquitinate monoubiquitinated histone H2B. Required to maintain the transcriptionally repressive state of homeotic genes throughout development. The PR-DUB complex has weak or no activity toward 'Lys-48'- and 'Lys-63'-linked polyubiquitin chains. Polycomb group (PcG) protein. The protein is Ubiquitin carboxyl-terminal hydrolase calypso of Drosophila virilis (Fruit fly).